Here is a 562-residue protein sequence, read N- to C-terminus: Urocanate hydratase (562 aa).

NAD(+) is bound by residues 52 to 53 (GG), Gln130, 176 to 178 (GMG), Glu196, Arg201, 242 to 243 (NA), 263 to 267 (QTSAH), 273 to 274 (YL), and Tyr322. The active site involves Cys410. Position 492 (Gly492) interacts with NAD(+).

The protein belongs to the urocanase family. NAD(+) serves as cofactor.

It localises to the cytoplasm. The catalysed reaction is 4-imidazolone-5-propanoate = trans-urocanate + H2O. Its pathway is amino-acid degradation; L-histidine degradation into L-glutamate; N-formimidoyl-L-glutamate from L-histidine: step 2/3. Catalyzes the conversion of urocanate to 4-imidazolone-5-propionate. The sequence is that of Urocanate hydratase from Klebsiella pneumoniae (strain 342).